We begin with the raw amino-acid sequence, 1578 residues long: MDDEDGRCLLDVICDPQALNDFLHGSEKLDSDDLLDAPVEAQSAFYEGPGLHVQEAAANHLNPEPSQPAPSVDLDFLEDDILGSPAAGGGGGGGGAPDQPCDILQQSLQEANITEQTLEAEAELDLGPFQLPTLQPADNGAGATGAAGATAVTAGPQALFPGSADLLGLQAPPTVLTHQALVPPQDVVNKALSVQPFLQPVGLGNVTLQPISGLQGLPNGSPGNAAAATLGLTPIQVVGQPVMALNPPTSQLLAKQVPVSGYLASAAGPSEPVTLASAGVSPQGAGLVIQKNLPAAVTTTLNGNSVFAGTGAATAAASGAPSGQPLAVAPGLGTSPLVQAPSVILHRTPTPIQPKPTGVLPSKLYQLTPKPFPPTGATLTIQGEPGTLPQQPKAPQNLTFMATGKAGQNVVLSGFPAPALQANVFKQPPVTTTGTAPPQPPGALSKPMSVHLLNQGSSIVIPAQHMLPGQNQFLLPGTPAVQLPQSLSALPANVGGQILTAAAPHAGGQLIANPILTNQNLAGPLSLGPVLAPHSGAHSAAHILSAAPIQVGQPALFQMPVSLATGSLPTQSQPAPTGPTATTVLQGVTLPPSAVAMLNTPDGLVQPSTPAATTGEATPVLAVQPATQVPPAVTTPLPMGLQQPQAQQPPQVPTPQAATQPQATPPQASPSLASSPEKIVLGQAPPAATTAILTQDSLQMFLPQERSQQPLSTEGPHLSVPASVIVSAPPPAQDPALATPVTKGAGLGAQTPDSRASPAPAPQIPAAAPLKAPGPASSPSLPHQAPLGDSPHMPSPHPARPPSRPPSRPHSRPPSQPQSLTCPPSEPTLHPCPPPQGPPTLPGIFVIQNQLGAPPPASTPASTAPGPPQPPLRPPSQPPEGPLPPASHLPPASTPSAVASSSEPSARLPVPTPPDFQLQFPPSQGPHKSPTPPPALHMVPEPTAPPPPPPRTFQMVTAPFPALPQPKALLERFHQVPSGIILQNKAGGTPTTPQTSTTLGTLTGPTASVLVSGQAPPGTPAASSHVPASTPMATTGLPPLLPAENKAFASNLPTLSVAKATVSGPGKPPAIQYDSKLCSLKKQPLLQPSKEACFLEHLHKHQGSVLHPDYKTAFPSFEDALHRLLPYHVYQGALPSPNDYHKVDEEFETVSTQLLKRTQAMLNKYRLLLLEESRRVSPSAEMVMIDRMFIQEEKTTLALDKQLAKEKPDEYVSSSRSLGFPVPVSSEGHRLPSHGQSSSSSTSGTSAQPPPHLPTKLVIRHGGAGGSPSVTWARASSSLSSTSSSSSSSSAASSLDADEDGPMPTRNRPPIKTYEARSRIGLKLKIKQEAGLSKVVHNTALDPVHQPLPAPTPAKGAEPPPHPAPPPLPPATQAQMNGTLDHPPPAVRKPTVPASCPRLPLRKTYRENMGNPGAAEGAQGRPRGAGSPTPLPTKVDEATSGLIRELAAVEDELYQRVLKGGPPPPETPASATSQGPTEPSWEAPVLPPAKRRKSESPDVDQASFSSDSPQDDTLTEHLQSAIDSILNLQQAPGRTPAGPYPHTGPTPGTPTSPAPLHRPDAFPPSSHNGGLGARTLNR.

Disordered stretches follow at residues 80 to 101 (DILG…DQPC), 631 to 673 (PAVT…PSLA), and 725 to 951 (IVSA…PPPR). Positions 86-96 (AAGGGGGGGGA) are enriched in gly residues. Low complexity-rich tracts occupy residues 631–662 (PAVT…TQPQ) and 764–782 (IPAA…PSLP). 3 stretches are compositionally biased toward pro residues: residues 793–816 (MPSP…PPSQ), 824–841 (PSEP…PPTL), and 865–888 (PGPP…PASH). Residues 889-906 (LPPASTPSAVASSSEPSA) show a composition bias toward low complexity. Residue S929 is modified to Phosphoserine. A Phosphothreonine modification is found at T931. Residues 942–951 (PTAPPPPPPR) show a composition bias toward pro residues. K1067 is subject to N6-acetyllysine. Residues 1206-1316 (EKPDEYVSSS…NRPPIKTYEA (111 aa)) are disordered. Low complexity-rich tracts occupy residues 1233–1247 (SHGQ…GTSA) and 1275–1294 (ASSS…AASS). Residue K1327 forms a Glycyl lysine isopeptide (Lys-Gly) (interchain with G-Cter in SUMO2) linkage. 2 disordered regions span residues 1342–1435 (DPVH…PTKV) and 1457–1578 (VLKG…TLNR). Residues 1346–1370 (QPLPAPTPAKGAEPPPHPAPPPLPP) are compositionally biased toward pro residues. At S1427 the chain carries Phosphoserine. Polar residues predominate over residues 1502–1532 (ASFSSDSPQDDTLTEHLQSAIDSILNLQQAP). Residues 1538-1553 (GPYPHTGPTPGTPTSP) show a composition bias toward pro residues.

In terms of assembly, component of the multiprotein chromatin-remodeling complexes SWI/SNF: SWI/SNF-A (BAF), SWI/SNF-B (PBAF) and related complexes. The canonical complex contains a catalytic subunit (either SMARCA4/BRG1/BAF190A or SMARCA2/BRM/BAF190B) and at least SMARCE1, ACTL6A/BAF53, SMARCC1/BAF155, SMARCC2/BAF170, and SMARCB1/SNF5/BAF47. Other subunits specific to each of the complexes may also be present permitting several possible combinations developmentally and tissue specific. Component of the SWI/SNF (GBAF) subcomplex, which includes at least BICRA or BICRAL (mutually exclusive), BRD9, SS18, the core BAF subunits, SMARCA2/BRM, SMARCA4/BRG1/BAF190A, ACTL6A/BAF53, SMARCC1/BAF155, and SMARCD1/BAF60A. Interacts with BRD4; the interaction bridges BRD4 to the GBAF complex.

Its subcellular location is the nucleus. Functionally, component of SWI/SNF chromatin remodeling subcomplex GBAF that carries out key enzymatic activities, changing chromatin structure by altering DNA-histone contacts within a nucleosome in an ATP-dependent manner. May play a role in BRD4-mediated gene transcription. The protein is BRD4-interacting chromatin-remodeling complex-associated protein of Mus musculus (Mouse).